The chain runs to 292 residues: Putative peptidyl-prolyl cis-trans isomerase NifM (292 aa).

Positions H148–S243 constitute a PpiC domain.

This sequence belongs to the PpiC/parvulin rotamase family.

The catalysed reaction is [protein]-peptidylproline (omega=180) = [protein]-peptidylproline (omega=0). In terms of biological role, required for the activation and stabilization of the iron-component (NifH) of nitrogenase. Probable PPIase. This Azotobacter vinelandii protein is Putative peptidyl-prolyl cis-trans isomerase NifM (nifM).